A 247-amino-acid chain; its full sequence is Cytochrome c oxidase subunit 2 (247 aa).

The Mitochondrial intermembrane portion of the chain corresponds to 1-38 (MREMMMNNMLNDVPTPWAMYFQDSATPNMEGMMELHNN). The helical transmembrane segment at 39 to 55 (VLFYLCVMLGFVTYMLY) threads the bilayer. Over 56–86 (NVMTVYNKSAMAYKYMNHGQFMEMMWTTFPA) the chain is Mitochondrial matrix. Residues 87 to 103 (MMLLMMAFPSFMLLYMC) form a helical membrane-spanning segment. Topologically, residues 104 to 247 (DEVMAPAMTI…VDFLAWIDEQ (144 aa)) are mitochondrial intermembrane. Positions 182, 217, 219, 221, 225, and 228 each coordinate Cu cation. Glu-219 is a Mg(2+) binding site.

The protein belongs to the cytochrome c oxidase subunit 2 family. Component of the cytochrome c oxidase (complex IV, CIV), a multisubunit enzyme composed of a catalytic core of 3 subunits and several supernumerary subunits. The complex exists as a monomer or a dimer and forms supercomplexes (SCs) in the inner mitochondrial membrane with ubiquinol-cytochrome c oxidoreductase (cytochrome b-c1 complex, complex III, CIII). The cofactor is Cu cation.

The protein localises to the mitochondrion inner membrane. It carries out the reaction 4 Fe(II)-[cytochrome c] + O2 + 8 H(+)(in) = 4 Fe(III)-[cytochrome c] + 2 H2O + 4 H(+)(out). Component of the cytochrome c oxidase, the last enzyme in the mitochondrial electron transport chain which drives oxidative phosphorylation. The respiratory chain contains 3 multisubunit complexes succinate dehydrogenase (complex II, CII), ubiquinol-cytochrome c oxidoreductase (cytochrome b-c1 complex, complex III, CIII) and cytochrome c oxidase (complex IV, CIV), that cooperate to transfer electrons derived from NADH and succinate to molecular oxygen, creating an electrochemical gradient over the inner membrane that drives transmembrane transport and the ATP synthase. Cytochrome c oxidase is the component of the respiratory chain that catalyzes the reduction of oxygen to water. Electrons originating from reduced cytochrome c in the intermembrane space (IMS) are transferred via the dinuclear copper A center (CU(A)) of subunit 2 and heme A of subunit 1 to the active site in subunit 1, a binuclear center (BNC) formed by heme A3 and copper B (CU(B)). The BNC reduces molecular oxygen to 2 water molecules using 4 electrons from cytochrome c in the IMS and 4 protons from the mitochondrial matrix. The sequence is that of Cytochrome c oxidase subunit 2 (COX2) from Eeniella nana (Yeast).